Reading from the N-terminus, the 574-residue chain is Developmental and secondary metabolism regulator veA (574 aa).

Disordered stretches follow at residues 1–22, 39–60, 255–500, and 513–548; these read MATRAPLAPPPNETEASVSRIT, ERARACGAGAKSSADRRPVDPP, RSSD…GAGK, and RSYEDSFGHDDRPLYNGMRPDTESHPRRLSDAGRNF. Positions 25–230 constitute a Velvet domain; sequence GKKLTYKLNV…AEQGCRVRIR (206 aa). The Nuclear localization signal motif lies at 39–44; the sequence is ERARAC. Pro residues-rich tracts occupy residues 314–323 and 330–341; these read RPMPPAPVPA and PAPPAPPAPPSH. 4 stretches are compositionally biased toward polar residues: residues 343 to 359, 385 to 394, 402 to 415, and 448 to 458; these read PGYQSHLSFGSTQTQYP, HARNPSTSAE, YPSSRVSTERSSYP, and VAQSAGPRSQT. The segment at 457–501 is PEST; the sequence is QTPSSSLVPSLPPLKALSGDYPNNLSQPSSSISQSPSHDLGAGKK. 2 stretches are compositionally biased toward low complexity: residues 459 to 474 and 482 to 493; these read PSSSLVPSLPPLKALS and SQPSSSISQSPS. 2 stretches are compositionally biased toward basic and acidic residues: residues 513–525 and 532–543; these read RSYEDSFGHDDRP and PDTESHPRRLSD.

It belongs to the velvet family. VeA subfamily. As to quaternary structure, component of the heterotrimeric velvet complex composed of laeA, veA and velB; VeA acting as a bridging protein between laeA and velB.

It is found in the nucleus. Its subcellular location is the cytoplasm. Functionally, component of the velvet transcription factor complex that controls sexual/asexual developmental ratio in response to light, promoting sexual development in the darkness while stimulating asexual sporulation under illumination. The velvet complex hat acts as a global regulator for secondary metabolite gene expression. Controls the expression of the aflatoxin gene cluster. Required for the expression of aflR and aflJ. Mediates the coordination of aflatoxigenic vesicles (aflatoxisomes) development with aflatoxin gene expression. Regulates branched chain amino acid and ethanol metabolism and acts as a positive regulator of mitochondrial and peroxisomal beta-oxidation. This Aspergillus parasiticus protein is Developmental and secondary metabolism regulator veA.